The sequence spans 516 residues: Nucleolar complex protein 4 homolog (516 aa).

3 consecutive transmembrane segments (helical) span residues 296–316 (SACD…FILI), 347–367 (FFHL…LVAA), and 375–395 (LALT…CNLL).

This sequence belongs to the CBF/MAK21 family.

It localises to the nucleus membrane. Its subcellular location is the nucleus. The protein resides in the nucleolus. This chain is Nucleolar complex protein 4 homolog (Noc4l), found in Mus musculus (Mouse).